The sequence spans 177 residues: Endoribonuclease YbeY (177 aa).

Zn(2+) is bound by residues His114, His118, and His124. A disordered region spans residues 154–177 (SYPEAIPTNPAPRRQASSSAGHIE). Positions 168–177 (QASSSAGHIE) are enriched in polar residues.

This sequence belongs to the endoribonuclease YbeY family. Requires Zn(2+) as cofactor.

It localises to the cytoplasm. Its function is as follows. Single strand-specific metallo-endoribonuclease involved in late-stage 70S ribosome quality control and in maturation of the 3' terminus of the 16S rRNA. The chain is Endoribonuclease YbeY from Cellvibrio japonicus (strain Ueda107) (Pseudomonas fluorescens subsp. cellulosa).